Here is a 362-residue protein sequence, read N- to C-terminus: Very-long-chain (3R)-3-hydroxyacyl-CoA dehydratase 3 (362 aa).

Position 1 is an N-acetylmethionine (Met1). The Cytoplasmic segment spans residues 1–149; it reads MENQVLTPHV…ETLTSLKKGY (149 aa). In terms of domain architecture, CS spans 5-94; sequence VLTPHVYWAQ…KESQWWERLT (90 aa). Phosphothreonine is present on Thr7. A coiled-coil region spans residues 111-136; the sequence is LDESDAEMELRAKEEEQLNKLRLESQ. Residues Ser114 and Ser135 each carry the phosphoserine modification. Residues 150–170 form a helical membrane-spanning segment; it reads LFMYNLVQFLGFSWIFVNMTV. The Lumenal segment spans residues 171 to 189; that stretch reads RFFILGKESFYDTFHTVAD. Residues 190–210 traverse the membrane as a helical segment; sequence MMYFCQMLAAVESINAAIGVT. The Cytoplasmic segment spans residues 211-212; that stretch reads KS. A helical membrane pass occupies residues 213-233; sequence PVVPSLFQLLGRNFILFIIFG. Residues 234-242 lie on the Lumenal side of the membrane; it reads TMEEMQNKA. Residues 243 to 263 form a helical membrane-spanning segment; that stretch reads VVFFVFYIWSTVEIFRYPFYM. Residues 264-280 are Cytoplasmic-facing; the sequence is LSCIDMDWKVLTWLRYT. A helical transmembrane segment spans residues 281 to 301; it reads VWIPLYPMGCLAEAVSVIQSI. Catalysis depends on residues Tyr286 and Glu293. Residues 302–325 lie on the Lumenal side of the membrane; sequence PVFNETGRFSFTLPYPVKIKVRFS. A helical membrane pass occupies residues 326-346; the sequence is FFLQIYLILLFLGLYVNFRYL. Residues 347–362 are Cytoplasmic-facing; that stretch reads YKQRRRRFGQKKKKIH.

It belongs to the very long-chain fatty acids dehydratase HACD family. As to quaternary structure, may interact with enzymes of the ELO family (including ELOVL1); with those enzymes that mediate condensation, the first of the four steps of the reaction cycle responsible for fatty acids elongation, may be part of a larger fatty acids elongase complex. Interacts with RAC1. Associates with internalized insulin receptor/INSR complexes on Golgi/endosomal membranes; HACD3/PTPLAD1 together with ATIC and PRKAA2/AMPK2 is proposed to be part of a signaling network regulating INSR autophosphorylation and endocytosis.

Its subcellular location is the endoplasmic reticulum membrane. The catalysed reaction is a very-long-chain (3R)-3-hydroxyacyl-CoA = a very-long-chain (2E)-enoyl-CoA + H2O. It carries out the reaction (3R)-hydroxyhexadecanoyl-CoA = (2E)-hexadecenoyl-CoA + H2O. It functions in the pathway lipid metabolism; fatty acid biosynthesis. Functionally, catalyzes the third of the four reactions of the long-chain fatty acids elongation cycle. This endoplasmic reticulum-bound enzymatic process, allows the addition of two carbons to the chain of long- and very long-chain fatty acids/VLCFAs per cycle. This enzyme catalyzes the dehydration of the 3-hydroxyacyl-CoA intermediate into trans-2,3-enoyl-CoA, within each cycle of fatty acid elongation. Thereby, it participates in the production of VLCFAs of different chain lengths that are involved in multiple biological processes as precursors of membrane lipids and lipid mediators. Involved in Rac1-signaling pathways leading to the modulation of gene expression. Promotes insulin receptor/INSR autophosphorylation and is involved in INSR internalization. The chain is Very-long-chain (3R)-3-hydroxyacyl-CoA dehydratase 3 from Bos taurus (Bovine).